The sequence spans 127 residues: Protein ApaG (127 aa).

Positions 3 to 127 (DDPRYRVEVE…FVLSVPRTLH (125 aa)) constitute an ApaG domain.

The chain is Protein ApaG from Xanthomonas axonopodis pv. citri (strain 306).